Consider the following 159-residue polypeptide: Ribosomal RNA large subunit methyltransferase H (159 aa).

S-adenosyl-L-methionine-binding positions include Leu76, Gly107, and 126–131 (LSKLTM).

It belongs to the RNA methyltransferase RlmH family. Homodimer.

It is found in the cytoplasm. The enzyme catalyses pseudouridine(1915) in 23S rRNA + S-adenosyl-L-methionine = N(3)-methylpseudouridine(1915) in 23S rRNA + S-adenosyl-L-homocysteine + H(+). In terms of biological role, specifically methylates the pseudouridine at position 1915 (m3Psi1915) in 23S rRNA. The protein is Ribosomal RNA large subunit methyltransferase H of Acinetobacter baumannii (strain AB307-0294).